The sequence spans 531 residues: Plant UBX domain-containing protein 11 (531 aa).

Residue Met1 is modified to N-acetylmethionine. Over residues Ala160–Ser173 the composition is skewed to low complexity. Disordered regions lie at residues Ala160–Asp316 and Ala441–Arg531. Polar residues-rich tracts occupy residues Glu174 to Gly190 and Glu201 to Ala214. Basic and acidic residues predominate over residues Val290–Glu301. Residues Lys312 to Val390 form the UBX domain. 2 stretches are compositionally biased toward polar residues: residues Ala441–Asn478 and Thr486–Leu496.

In terms of assembly, interacts with CDC48A.

The sequence is that of Plant UBX domain-containing protein 11 from Arabidopsis thaliana (Mouse-ear cress).